A 962-amino-acid chain; its full sequence is UPF0182 protein SACE_1102 (962 aa).

A run of 7 helical transmembrane segments spans residues 10-30 (ILLI…RLLG), 55-75 (LGLG…NLWI), 106-126 (LFGW…AQSD), 168-188 (FVAI…FGGI), 203-223 (IQLS…YFLD), 250-270 (VKLI…AAIF), and 279-299 (IATV…PALL). Disordered regions lie at residues 707 to 730 (RTFW…GNQQ) and 876 to 916 (FGPG…EMTK). Over residues 899 to 910 (GQQPPTQQPPAG) the composition is skewed to pro residues.

It belongs to the UPF0182 family.

It is found in the cell membrane. The polypeptide is UPF0182 protein SACE_1102 (Saccharopolyspora erythraea (strain ATCC 11635 / DSM 40517 / JCM 4748 / NBRC 13426 / NCIMB 8594 / NRRL 2338)).